The chain runs to 44 residues: Photosystem I reaction center subunit IX (44 aa).

The chain crosses the membrane as a helical span at residues 9 to 29 (FIRSAPVVAAVWLSLTAGIII).

This sequence belongs to the PsaJ family.

It is found in the cellular thylakoid membrane. May help in the organization of the PsaE and PsaF subunits. The chain is Photosystem I reaction center subunit IX from Prochlorococcus marinus subsp. pastoris (strain CCMP1986 / NIES-2087 / MED4).